A 140-amino-acid polypeptide reads, in one-letter code: uncharacterized protein (140 aa).

This is an uncharacterized protein from Synechococcus sp. (strain WH8020).